Consider the following 218-residue polypeptide: Glutathione S-transferase Mu 4 (218 aa).

The GST N-terminal domain occupies 1-88 (MPMTLGYWDI…YIARKHNLCG (88 aa)). Residues 7-8 (YW), 46-50 (WLSEK), 59-60 (NL), and 72-73 (QS) each bind glutathione. The GST C-terminal domain occupies 90–208 (TEEEKIRVDI…KTSRFLRTPL (119 aa)). Y116 contacts substrate.

It belongs to the GST superfamily. Mu family. In terms of assembly, homodimer. Widely expressed.

The protein localises to the cytoplasm. It carries out the reaction RX + glutathione = an S-substituted glutathione + a halide anion + H(+). The catalysed reaction is 1-chloro-2,4-dinitrobenzene + glutathione = 2,4-dinitrophenyl-S-glutathione + chloride + H(+). The enzyme catalyses (13S,14S)-epoxy-(4Z,7Z,9E,11E,16Z,19Z)-docosahexaenoate + glutathione = (13R)-S-glutathionyl-(14S)-hydroxy-(4Z,7Z,9E,11E,16Z,19Z)-docosahexaenoate. It catalyses the reaction leukotriene C4 = leukotriene A4 + glutathione. Its function is as follows. Conjugation of reduced glutathione to a wide number of exogenous and endogenous hydrophobic electrophiles. Catalyzes the conjugation of leukotriene A4 with reduced glutathione (GSH) to form leukotriene C4. Can also catalyze the transfer of a glutathionyl group from glutathione (GSH) to 13(S),14(S)-epoxy-docosahexaenoic acid to form maresin conjugate in tissue regeneration 1 (MCTR1), a bioactive lipid mediator that possess potent anti-inflammatory and proresolving actions. The polypeptide is Glutathione S-transferase Mu 4 (Mus musculus (Mouse)).